The sequence spans 494 residues: Alpha-amylase B (494 aa).

The first 18 residues, 1-18 (MFLAKSIVCLALLAVANA), serve as a signal peptide directing secretion. Position 19 is a pyrrolidone carboxylic acid (Q19). C46 and C102 are oxidised to a cystine. Residues N116, R165, and D174 each contribute to the Ca(2+) site. C153 and C167 form a disulfide bridge. R202 provides a ligand contact to chloride. D204 serves as the catalytic Nucleophile. Position 208 (H208) interacts with Ca(2+). Residue E241 is the Proton donor of the active site. The chloride site is built by N304 and R343. Cystine bridges form between C376-C382 and C448-C460.

Belongs to the glycosyl hydrolase 13 family. As to quaternary structure, monomer. It depends on Ca(2+) as a cofactor. The cofactor is chloride.

It catalyses the reaction Endohydrolysis of (1-&gt;4)-alpha-D-glucosidic linkages in polysaccharides containing three or more (1-&gt;4)-alpha-linked D-glucose units.. This Drosophila yakuba (Fruit fly) protein is Alpha-amylase B (Amy-d).